Consider the following 69-residue polypeptide: Small, acid-soluble spore protein I (69 aa).

It belongs to the SspI family.

It localises to the spore core. The chain is Small, acid-soluble spore protein I from Bacillus anthracis (strain A0248).